We begin with the raw amino-acid sequence, 102 residues long: Large ribosomal subunit protein bL28 (102 aa).

A disordered region spans residues 1-20; it reads MSRRCELTAKGPQVGHKVSH.

Belongs to the bacterial ribosomal protein bL28 family.

This Bradyrhizobium sp. (strain ORS 278) protein is Large ribosomal subunit protein bL28.